A 101-amino-acid polypeptide reads, in one-letter code: Large ribosomal subunit protein bL28 (101 aa).

Belongs to the bacterial ribosomal protein bL28 family.

The protein is Large ribosomal subunit protein bL28 of Methylorubrum populi (strain ATCC BAA-705 / NCIMB 13946 / BJ001) (Methylobacterium populi).